A 99-amino-acid polypeptide reads, in one-letter code: UPF0235 protein ASA_3628 (99 aa).

The protein belongs to the UPF0235 family.

The polypeptide is UPF0235 protein ASA_3628 (Aeromonas salmonicida (strain A449)).